We begin with the raw amino-acid sequence, 422 residues long: L-threonine dehydratase biosynthetic IlvA (422 aa).

N6-(pyridoxal phosphate)lysine is present on K60. Pyridoxal 5'-phosphate contacts are provided by residues N87, 190-194 (GGGGL), and S315. The ACT-like domain occupies 339–413 (HYFIVNFPQR…KPFHYVEVNK (75 aa)).

It belongs to the serine/threonine dehydratase family. As to quaternary structure, homotetramer. Pyridoxal 5'-phosphate serves as cofactor.

The catalysed reaction is L-threonine = 2-oxobutanoate + NH4(+). It participates in amino-acid biosynthesis; L-isoleucine biosynthesis; 2-oxobutanoate from L-threonine: step 1/1. Catalyzes the anaerobic formation of alpha-ketobutyrate and ammonia from threonine in a two-step reaction. The first step involved a dehydration of threonine and a production of enamine intermediates (aminocrotonate), which tautomerizes to its imine form (iminobutyrate). Both intermediates are unstable and short-lived. The second step is the nonenzymatic hydrolysis of the enamine/imine intermediates to form 2-ketobutyrate and free ammonia. In the low water environment of the cell, the second step is accelerated by RidA. The chain is L-threonine dehydratase biosynthetic IlvA (ilvA) from Bacillus subtilis (strain 168).